The primary structure comprises 391 residues: Large envelope protein (391 aa).

The residue at position 1 (methionine 1) is an N-acetylmethionine. A lipid anchor (N-myristoyl glycine; by host) is attached at glycine 2. The segment at 2 to 108 (GLNQSTFNPL…PPLRDTHPQA (107 aa)) is pre-S1. Residues 2-163 (GLNQSTFNPL…FSTTGVPVST (162 aa)) form a pre-S region. At 2-170 (GLNQSTFNPL…VSTMDITSSG (169 aa)) the chain is on the virion surface; in external conformation side. Residues 2–242 (GLNQSTFNPL…PGYRWMCLRR (241 aa)) lie on the Intravirion; in internal conformation side of the membrane. Residues 73–107 (LSVTVPDTPPPPSTNRDKGRKPTPATPPLRDTHPQ) are disordered. Positions 109–163 (MTWNTSSFQSYLQNPKVRGLYFPAGGSTSSIVNPVPTTASTTSSSFSTTGVPVST) are pre-S2. A helical transmembrane segment spans residues 171 to 191 (FLGPLLALQAVFFLLTKILTM). At 192–242 (PQSLDSLWTSLNFLGGTPACPGLNSQSPTSSHSPTCCPPTCPGYRWMCLRR) the chain is on the intravirion; in external conformation side. The helical transmembrane segment at 243-263 (SIIFLFILLLCLIFLLVLLDY) threads the bilayer. At 264–339 (QGMLPVCPLL…WALARFSWLN (76 aa)) the chain is on the virion surface side. Asparagine 311 is a glycosylation site (N-linked (GlcNAc...) asparagine; by host). A helical membrane pass occupies residues 340–360 (SLLPFVQWFAGLSPTVWLLVI). Over 361–366 (WMMWFW) the chain is Intravirion. Residues 367–389 (GPSLFSILSPFLPLLPLFFWLWA) traverse the membrane as a helical segment. Topologically, residues 390 to 391 (YI) are virion surface.

Belongs to the orthohepadnavirus major surface antigen family. In its internal form (Li-HBsAg), interacts with the capsid protein and with the isoform S. Interacts with host chaperone CANX. As to quaternary structure, associates with host chaperone CANX through its pre-S2 N glycan; this association may be essential for isoform M proper secretion. In terms of assembly, interacts with isoform L. Interacts with the antigens of satellite virus HDV (HDVAgs); this interaction is required for encapsidation of HDV genomic RNA. Post-translationally, isoform M is N-terminally acetylated by host at a ratio of 90%, and N-glycosylated by host at the pre-S2 region. In terms of processing, myristoylated.

It is found in the virion membrane. The large envelope protein exists in two topological conformations, one which is termed 'external' or Le-HBsAg and the other 'internal' or Li-HBsAg. In its external conformation the protein attaches the virus to cell receptors and thereby initiating infection. This interaction determines the species specificity and liver tropism. This attachment induces virion internalization predominantly through caveolin-mediated endocytosis. The large envelope protein also assures fusion between virion membrane and endosomal membrane. In its internal conformation the protein plays a role in virion morphogenesis and mediates the contact with the nucleocapsid like a matrix protein. Functionally, the middle envelope protein plays an important role in the budding of the virion. It is involved in the induction of budding in a nucleocapsid independent way. In this process the majority of envelope proteins bud to form subviral lipoprotein particles of 22 nm of diameter that do not contain a nucleocapsid. The chain is Large envelope protein from Woolly monkey hepatitis B virus (isolate Louisville) (WMHBV).